The primary structure comprises 510 residues: Maturase K (510 aa).

Belongs to the intron maturase 2 family. MatK subfamily.

It is found in the plastid. Its subcellular location is the chloroplast. In terms of biological role, usually encoded in the trnK tRNA gene intron. Probably assists in splicing its own and other chloroplast group II introns. The protein is Maturase K of Populus trichocarpa (Western balsam poplar).